The sequence spans 251 residues: Hydroxyacylglutathione hydrolase (251 aa).

Zn(2+)-binding residues include His53, His55, Asp57, His58, His110, Asp127, and His165.

The protein belongs to the metallo-beta-lactamase superfamily. Glyoxalase II family. Monomer. Zn(2+) is required as a cofactor.

The enzyme catalyses an S-(2-hydroxyacyl)glutathione + H2O = a 2-hydroxy carboxylate + glutathione + H(+). The protein operates within secondary metabolite metabolism; methylglyoxal degradation; (R)-lactate from methylglyoxal: step 2/2. Thiolesterase that catalyzes the hydrolysis of S-D-lactoyl-glutathione to form glutathione and D-lactic acid. The protein is Hydroxyacylglutathione hydrolase of Erwinia tasmaniensis (strain DSM 17950 / CFBP 7177 / CIP 109463 / NCPPB 4357 / Et1/99).